The following is a 3198-amino-acid chain: Helicase domino (3198 aa).

The segment covering 1–12 has biased composition (gly residues); sequence MNEGNSAGGGHE. 3 disordered regions span residues 1 to 27, 93 to 112, and 119 to 148; these read MNEG…RVTP, LPQQ…APAH, and SSTI…AASI. Over residues 134–143 the composition is skewed to basic and acidic residues; it reads QRLDDNEDRT. Positions 187 to 212 form a coiled coil; sequence KKRILQQKLQILRNLKERHLENVSEY. Disordered stretches follow at residues 256-350 and 391-474; these read TSAA…SATS and GGTP…TPNS. Composition is skewed to polar residues over residues 264–281 and 297–329; these read QNQK…SSLV and NISN…TESN. Low complexity predominate over residues 330–350; the sequence is SSTTVPGTATSGAATSTSATS. The segment covering 391 to 404 has biased composition (polar residues); the sequence is GGTPLLPCNTSAGS. Residues 452 to 464 are compositionally biased toward low complexity; it reads PGTPTSGSLLSPA. The HSA domain occupies 507–579; the sequence is LPKLQEPSRP…QELQLKRVAS (73 aa). The interval 635-848 is disordered; that stretch reads NKSVADTPSL…DMEEQDEQED (214 aa). Polar residues predominate over residues 638-650; that stretch reads VADTPSLNSSRLT. Positions 652–664 are enriched in basic and acidic residues; the sequence is PKRESDDDFRPES. Ser656, Ser664, and Ser666 each carry phosphoserine. Positions 666–696 form a coiled coil; it reads SEDDEETIAKAEEDAADVKEEVTALAKESEM. Basic and acidic residues-rich tracts occupy residues 672–695 and 711–721; these read TIAK…KESE and ENRDKLMKEEQ. Thr729 is subject to Phosphothreonine. Phosphoserine is present on residues Ser733, Ser736, and Ser744. A coiled-coil region spans residues 741–784; sequence KEASDDDENTISKQEEAEQEIDHKKEIDELEADNDLSVEQLLAK. The span at 753 to 767 shows a compositional bias: basic and acidic residues; it reads KQEEAEQEIDHKKEI. The segment covering 805–831 has biased composition (acidic residues); sequence LDSDDDSTAVDSTEESEDAATEDEEDL. Thr838 carries the phosphothreonine modification. The Helicase ATP-binding domain occupies 926 to 1091; sequence VTMNERKLNG…WSLMHFLMPY (166 aa). 939 to 946 provides a ligand contact to ATP; that stretch reads DEMGLGKT. The disordered stretch occupies residues 1471–1492; the sequence is VQKQSIANGKTEPEEETEAEDP. The Helicase C-terminal domain occupies 1662–1812; that stretch reads TMDRLLRQLK…DMAIEGGNFT (151 aa). Residues 1828–1856 form a disordered region; it reads EQSEQDESSQEKSENKDRIVATTTLSDTP. A compositionally biased stretch (basic and acidic residues) spans 1836–1846; it reads SQEKSENKDRI. The stretch at 1951–1996 forms a coiled coil; it reads AAWTAEQLRAAEAELEAQKREWEANRLAAMHKEEELLKQETEAEEM. Positions 2061–2100 are disordered; that stretch reads KEHKRSRTDAGYDGSRRPNKMRREDNYVPPRSLFDRPTPQ. The span at 2067 to 2086 shows a compositional bias: basic and acidic residues; it reads RTDAGYDGSRRPNKMRREDN. The region spanning 2136–2205 is the Myb-like domain; it reads TEPEAMAEWC…QCRWRYETHI (70 aa). Residues 2318–2362 form a disordered region; it reads IREKQRGQQMSQPPVGVGVVQQMQQQSQQQQQPAPPPLPQQQQPQ. The span at 2325-2349 shows a compositional bias: low complexity; it reads QQMSQPPVGVGVVQQMQQQSQQQQQ.

This sequence belongs to the SNF2/RAD54 helicase family. SWR1 subfamily. As to quaternary structure, component of the Tip60 chromatin-remodeling complex which contains Domino, Tip60, Tra1, Brd8, E(Pc), DMAP1, Pontin, Reptin, Ing3, Act87E, BAP55, Mrg15, MrgBP, Gas41 and YL-1. In terms of tissue distribution, isoform B is present at high levels in ovary, in follicle cells, nurse cells and oocyte. Isoform B is also present in germline and somatic stem cells from the germarium. Isoform A is undetectable in adult ovary (at protein level).

It is found in the nucleus. Its function is as follows. Mediates the ATP-dependent exchange of unmodified histone H2AV for its phosphorylated and acetylated form H2AVK5acS138ph, leading to transcriptional regulation of selected genes by chromatin remodeling. Involved in Notch signaling. Represses E2F target genes. Required for somatic stem cell self-renewal but not for germline stem cell self-renewal. Involved in oogenesis. The chain is Helicase domino (dom) from Drosophila melanogaster (Fruit fly).